We begin with the raw amino-acid sequence, 230 residues long: Somatolactin (230 aa).

The first 23 residues, 1 to 23 (MMTAVKQSGVWAVLLWPYLLAVS), serve as a signal peptide directing secretion. 3 disulfides stabilise this stretch: C28/C38, C88/C204, and C221/C229. N-linked (GlcNAc...) asparagine glycosylation is found at N34 and N144.

Belongs to the somatotropin/prolactin family. Pituitary gland.

The protein resides in the secreted. This chain is Somatolactin, found in Solea senegalensis (Senegalese sole).